A 1181-amino-acid polypeptide reads, in one-letter code: HEAT repeat-containing protein 6 (1181 aa).

An HEAT 1 repeat occupies 159 to 198 (LELLGETGLLMKLSDLAQSDPEVRRAAVHCMANLCLSVPG). Disordered regions lie at residues 294-347 (DGRT…PVTG) and 371-407 (LDGS…AEGG). The span at 300 to 312 (KPQQSESSASRPT) shows a compositional bias: polar residues. The segment covering 313-325 (LNKKKKSKVKPKK) has biased composition (basic residues). 4 positions are modified to phosphoserine: Ser336, Ser337, Ser399, and Ser402. The span at 383 to 399 (SSPFSSSSWKRVSSSES) shows a compositional bias: low complexity. HEAT repeat units follow at residues 452–490 (ELGS…GSKQ), 514–552 (SSIR…DAPY), and 558–595 (SLLT…THAP). The segment at 613 to 648 (NSNSATPHLSPPDWWKKAPAGPSLEETSVSSPKGSS) is disordered. Thr618 carries the phosphothreonine modification. The segment covering 637-646 (EETSVSSPKG) has biased composition (polar residues). The residue at position 643 (Ser643) is a Phosphoserine.

The polypeptide is HEAT repeat-containing protein 6 (HEATR6) (Pongo abelii (Sumatran orangutan)).